The primary structure comprises 2967 residues: BEACH domain-containing protein lvsD (2967 aa).

Disordered regions lie at residues Met1–Gly25, Asn322–Ser364, Ile588–Leu615, Asn917–Asn936, Gly1077–Asp1105, Asn1173–Arg1220, Asn1583–Asn1613, Gln1831–Val1859, Pro1921–Asn2009, and Lys2029–Asn2062. The BEACH 1 domain maps to Met229–Tyr491. The segment covering Ser1079–Asn1092 has biased composition (low complexity). The span at Asn1093 to Asp1105 shows a compositional bias: basic and acidic residues. 6 stretches are compositionally biased toward low complexity: residues Pro1185–Ser1194, Asn1583–Asn1611, Gln1831–Ser1857, Gln1926–Asn1980, Asn1993–Thr2006, and Ser2034–Asn2062. The BEACH-type PH domain maps to Asn2060–Gly2162. BEACH domains lie at Thr2202–Arg2492 and Asn2628–Asn2785. WD repeat units lie at residues Asn2658–His2710 and Gly2720–Gln2761. Disordered stretches follow at residues Ser2798–Thr2820 and Pro2915–Asn2934. Low complexity-rich tracts occupy residues Ser2811 to Thr2820 and Asn2924 to Asn2934.

In Dictyostelium discoideum (Social amoeba), this protein is BEACH domain-containing protein lvsD (lvsD).